A 161-amino-acid polypeptide reads, in one-letter code: Nucleotide-binding protein SAR11_0692 (161 aa).

Belongs to the YajQ family.

In terms of biological role, nucleotide-binding protein. The sequence is that of Nucleotide-binding protein SAR11_0692 from Pelagibacter ubique (strain HTCC1062).